The chain runs to 268 residues: Embryonic abundant protein VF30.1 (268 aa).

A signal peptide spans 1 to 25; it reads MEFAHLTVLSLFCLAFVGITATSSG. Residues 68–259 form the BURP domain; the sequence is LFFEHDLHPG…GNKAAAWVPN (192 aa). An N-linked (GlcNAc...) asparagine glycan is attached at N259.

Seed.

Its subcellular location is the secreted. This Vicia faba (Broad bean) protein is Embryonic abundant protein VF30.1.